We begin with the raw amino-acid sequence, 184 residues long: NADH-quinone oxidoreductase subunit B 1 (184 aa).

The [4Fe-4S] cluster site is built by Cys37, Cys38, Cys103, and Cys132.

This sequence belongs to the complex I 20 kDa subunit family. In terms of assembly, NDH-1 is composed of 14 different subunits. Subunits NuoB, C, D, E, F, and G constitute the peripheral sector of the complex. [4Fe-4S] cluster serves as cofactor.

It localises to the cell membrane. It carries out the reaction a quinone + NADH + 5 H(+)(in) = a quinol + NAD(+) + 4 H(+)(out). NDH-1 shuttles electrons from NADH, via FMN and iron-sulfur (Fe-S) centers, to quinones in the respiratory chain. The immediate electron acceptor for the enzyme in this species is believed to be a menaquinone. Couples the redox reaction to proton translocation (for every two electrons transferred, four hydrogen ions are translocated across the cytoplasmic membrane), and thus conserves the redox energy in a proton gradient. The protein is NADH-quinone oxidoreductase subunit B 1 of Streptomyces coelicolor (strain ATCC BAA-471 / A3(2) / M145).